We begin with the raw amino-acid sequence, 287 residues long: Putative glutamate--cysteine ligase regulatory subunit (287 aa).

Belongs to the aldo/keto reductase family. Glutamate--cysteine ligase light chain subfamily. Heterodimer of a catalytic heavy chain and a regulatory light chain.

It localises to the cytoplasm. It participates in sulfur metabolism; glutathione biosynthesis; glutathione from L-cysteine and L-glutamate: step 1/2. The chain is Putative glutamate--cysteine ligase regulatory subunit from Schizosaccharomyces pombe (strain 972 / ATCC 24843) (Fission yeast).